A 382-amino-acid chain; its full sequence is Galactokinase (382 aa).

Substrate is bound at residue 34 to 37 (EHTD). 124–130 (GAGLSSS) contributes to the ATP binding site. Residues S130 and E162 each coordinate Mg(2+). Residue D174 is the Proton acceptor of the active site. Y223 lines the substrate pocket.

The protein belongs to the GHMP kinase family. GalK subfamily.

It localises to the cytoplasm. It carries out the reaction alpha-D-galactose + ATP = alpha-D-galactose 1-phosphate + ADP + H(+). It participates in carbohydrate metabolism; galactose metabolism. Its function is as follows. Catalyzes the transfer of the gamma-phosphate of ATP to D-galactose to form alpha-D-galactose-1-phosphate (Gal-1-P). The chain is Galactokinase from Escherichia coli O81 (strain ED1a).